A 206-amino-acid chain; its full sequence is Large ribosomal subunit protein eL13z (206 aa).

The tract at residues 185–206 (TNKRHAGARAKRAAEAEKEEKK) is disordered. Positions 186–195 (NKRHAGARAK) are enriched in basic residues. A compositionally biased stretch (basic and acidic residues) spans 196–206 (RAAEAEKEEKK).

It belongs to the eukaryotic ribosomal protein eL13 family.

The protein localises to the cytoplasm. In Arabidopsis thaliana (Mouse-ear cress), this protein is Large ribosomal subunit protein eL13z (RPL13B).